We begin with the raw amino-acid sequence, 94 residues long: Integration host factor subunit beta (94 aa).

The protein belongs to the bacterial histone-like protein family. As to quaternary structure, heterodimer of an alpha and a beta chain.

Its function is as follows. This protein is one of the two subunits of integration host factor, a specific DNA-binding protein that functions in genetic recombination as well as in transcriptional and translational control. This Haemophilus influenzae (strain PittGG) protein is Integration host factor subunit beta.